The primary structure comprises 190 residues: Glutathione peroxidase 2 (190 aa).

Sec-40 is a catalytic residue. Residue Sec-40 is a non-standard amino acid, selenocysteine.

The protein belongs to the glutathione peroxidase family. In terms of assembly, homotetramer. In terms of tissue distribution, mucosal epithelium of the gastrointestinal tract.

It is found in the cytoplasm. Its subcellular location is the cytosol. The catalysed reaction is 2 glutathione + H2O2 = glutathione disulfide + 2 H2O. The enzyme catalyses a hydroperoxy polyunsaturated fatty acid + 2 glutathione = a hydroxy polyunsaturated fatty acid + glutathione disulfide + H2O. It catalyses the reaction tert-butyl hydroperoxide + 2 glutathione = tert-butanol + glutathione disulfide + H2O. It carries out the reaction cumene hydroperoxide + 2 glutathione = 2-phenylpropan-2-ol + glutathione disulfide + H2O. The catalysed reaction is (13S)-hydroperoxy-(9Z,11E)-octadecadienoate + 2 glutathione = (13S)-hydroxy-(9Z,11E)-octadecadienoate + glutathione disulfide + H2O. The enzyme catalyses (5S)-hydroperoxy-(6E,8Z,11Z,14Z)-eicosatetraenoate + 2 glutathione = (5S)-hydroxy-(6E,8Z,11Z,14Z)-eicosatetraenoate + glutathione disulfide + H2O. It catalyses the reaction (12R)-hydroperoxy-(5Z,8Z,10E,14Z)-eicosatetraenoate + 2 glutathione = (12R)-hydroxy-(5Z,8Z,10E,14Z)-eicosatetraenoate + glutathione disulfide + H2O. It carries out the reaction (15S)-hydroperoxy-(5Z,8Z,11Z,13E)-eicosatetraenoate + 2 glutathione = (15S)-hydroxy-(5Z,8Z,11Z,13E)-eicosatetraenoate + glutathione disulfide + H2O. Functionally, catalyzes the reduction of hydroperoxides in a glutathione-dependent manner thus regulating cellular redox homeostasis. Can reduce small soluble hydroperoxide such as H2O2. Can reduce cumene hydroperoxide and tert-butyl hydroperoxide, as well as several fatty acid-derived hydroperoxides. Cannot reduce phosphatidycholine hydroperoxide. This Rattus norvegicus (Rat) protein is Glutathione peroxidase 2 (Gpx2).